The following is a 712-amino-acid chain: Follistatin-like domain-containing protein DDB_G0289517 (712 aa).

The signal sequence occupies residues 1 to 21 (MKIQTIIQIVLISFLFLNVES). N-linked (GlcNAc...) asparagine glycosylation occurs at N102. Positions 181 to 400 (DIYNHLNPDS…SSSPVHQDPC (220 aa)) are disordered. Positions 192–203 (QFKDKPNHENHK) are enriched in basic and acidic residues. Residues 204 to 214 (KDKNNKKHKKD) show a composition bias toward basic residues. N217 and N234 each carry an N-linked (GlcNAc...) asparagine glycan. The segment covering 220–251 (DKNNNNNNNNNNKKNKTINNNEPNQNQQSNPI) has biased composition (low complexity). Over residues 254 to 269 (TFNNETPFPWNFKNQD) the composition is skewed to polar residues. The segment covering 270–281 (QQQQKQEQTQKQ) has biased composition (low complexity). Polar residues predominate over residues 301–321 (KEPTTHLNTIEPTSFTASASR). Over residues 330-339 (KDEENIDENN) the composition is skewed to acidic residues. Over residues 352 to 364 (DDKSKKPKDDEKH) the composition is skewed to basic and acidic residues. N-linked (GlcNAc...) asparagine glycosylation is present at N369. The segment covering 374–384 (PADDPSIEITE) has biased composition (acidic residues). Residues 386–395 (PTITPSSSPV) are compositionally biased toward polar residues. Follistatin-like domains follow at residues 399–421 (PCKK…AYCK) and 471–494 (TCST…PYCQ). Residue N407 is glycosylated (N-linked (GlcNAc...) asparagine). N505, N524, and N566 each carry an N-linked (GlcNAc...) asparagine glycan. A Follistatin-like 3 domain is found at 596-618 (SCETLLCEGVNSYCVENGGPICK). N622 is a glycosylation site (N-linked (GlcNAc...) asparagine). 2 consecutive Follistatin-like domains span residues 660–682 (SCSV…PKCY) and 687–710 (ECSN…GACL).

Its subcellular location is the secreted. This Dictyostelium discoideum (Social amoeba) protein is Follistatin-like domain-containing protein DDB_G0289517.